We begin with the raw amino-acid sequence, 258 residues long: Phosphoadenosine 5'-phosphosulfate reductase (258 aa).

C244 (nucleophile; cysteine thiosulfonate intermediate) is an active-site residue.

The protein belongs to the PAPS reductase family. CysH subfamily.

The protein localises to the cytoplasm. It carries out the reaction [thioredoxin]-disulfide + sulfite + adenosine 3',5'-bisphosphate + 2 H(+) = [thioredoxin]-dithiol + 3'-phosphoadenylyl sulfate. It functions in the pathway sulfur metabolism; hydrogen sulfide biosynthesis; sulfite from sulfate: step 3/3. In terms of biological role, catalyzes the formation of sulfite from phosphoadenosine 5'-phosphosulfate (PAPS) using thioredoxin as an electron donor. The sequence is that of Phosphoadenosine 5'-phosphosulfate reductase from Vibrio vulnificus (strain CMCP6).